A 375-amino-acid chain; its full sequence is uncharacterized protein (375 aa).

Positions 54 to 78 (EGIPPPTQSQEPLKPQENISRPIHH) are disordered.

This is an uncharacterized protein from Bos taurus (Bovine).